The following is a 488-amino-acid chain: Proline--tRNA ligase (488 aa).

Belongs to the class-II aminoacyl-tRNA synthetase family. ProS type 3 subfamily. As to quaternary structure, homodimer.

The protein resides in the cytoplasm. It carries out the reaction tRNA(Pro) + L-proline + ATP = L-prolyl-tRNA(Pro) + AMP + diphosphate. In terms of biological role, catalyzes the attachment of proline to tRNA(Pro) in a two-step reaction: proline is first activated by ATP to form Pro-AMP and then transferred to the acceptor end of tRNA(Pro). In Symbiobacterium thermophilum (strain DSM 24528 / JCM 14929 / IAM 14863 / T), this protein is Proline--tRNA ligase.